The primary structure comprises 188 residues: Elongation factor P (188 aa).

At K34 the chain carries N6-(3,6-diaminohexanoyl)-5-hydroxylysine.

The protein belongs to the elongation factor P family. May be beta-lysylated on the epsilon-amino group of Lys-34 by the combined action of EpmA and EpmB, and then hydroxylated on the C5 position of the same residue by EpmC (if this protein is present). Lysylation is critical for the stimulatory effect of EF-P on peptide-bond formation. The lysylation moiety may extend toward the peptidyltransferase center and stabilize the terminal 3-CCA end of the tRNA. Hydroxylation of the C5 position on Lys-34 may allow additional potential stabilizing hydrogen-bond interactions with the P-tRNA.

It localises to the cytoplasm. It functions in the pathway protein biosynthesis; polypeptide chain elongation. In terms of biological role, involved in peptide bond synthesis. Alleviates ribosome stalling that occurs when 3 or more consecutive Pro residues or the sequence PPG is present in a protein, possibly by augmenting the peptidyl transferase activity of the ribosome. Modification of Lys-34 is required for alleviation. In Vibrio vulnificus (strain CMCP6), this protein is Elongation factor P.